The following is a 604-amino-acid chain: Siderophore iron transporter mirB (604 aa).

The interval 1-61 (MTIGSKFSLL…DNSSDEALPS (61 aa)) is disordered. Transmembrane regions (helical) follow at residues 73 to 95 (AVTL…LVTL), 115 to 137 (FQSH…ALYI), 149 to 168 (AEGW…MMAA), 178 to 200 (ADVF…AADI), 207 to 224 (GIAF…AFAG), 237 to 259 (WRWG…YFVL), 289 to 311 (YFFA…FLLP), 326 to 343 (YIIA…LFVL), 363 to 385 (TVLG…NSYF), 400 to 422 (AGYV…GFAI), 427 to 449 (YFRW…MIHF), 454 to 476 (QYIG…FVLL), 489 to 511 (YVAA…GNAI), and 566 to 588 (AQAR…MFMV).

Belongs to the major facilitator superfamily.

Its subcellular location is the membrane. Involved in the transport of siderophore triacestylfusarinine C and so has a role in iron homeostasis. The protein is Siderophore iron transporter mirB (mirB) of Emericella nidulans (strain FGSC A4 / ATCC 38163 / CBS 112.46 / NRRL 194 / M139) (Aspergillus nidulans).